A 1262-amino-acid chain; its full sequence is Isoleucine--tRNA ligase, cytoplasmic (1262 aa).

At Met1 the chain carries N-acetylmethionine. A 'HIGH' region motif is present at residues 48–58; that stretch reads PFATGLPHYGH. Positions 600 to 604 match the 'KMSKS' region motif; sequence KMSKR. An ATP-binding site is contributed by Lys603. Residues Ser1047 and Ser1049 each carry the phosphoserine modification. The residue at position 1058 (Thr1058) is a Phosphothreonine.

The protein belongs to the class-I aminoacyl-tRNA synthetase family. As to quaternary structure, part of a multisubunit complex that groups tRNA ligases for Arg (RARS1), Asp (DARS1), Gln (QARS1), Ile (IARS1), Leu (LARS1), Lys (KARS1), Met (MARS1) the bifunctional ligase for Glu and Pro (EPRS1) and the auxiliary subunits AIMP1/p43, AIMP2/p38 and EEF1E1/p18. Expressed in liver and muscle (at protein level).

Its subcellular location is the cytoplasm. It is found in the cytosol. It carries out the reaction tRNA(Ile) + L-isoleucine + ATP = L-isoleucyl-tRNA(Ile) + AMP + diphosphate. Functionally, catalyzes the specific attachment of an amino acid to its cognate tRNA in a 2 step reaction: the amino acid (AA) is first activated by ATP to form AA-AMP and then transferred to the acceptor end of the tRNA. In Homo sapiens (Human), this protein is Isoleucine--tRNA ligase, cytoplasmic.